The primary structure comprises 207 residues: ATP synthase subunit 5, mitochondrial (207 aa).

The protein belongs to the ATPase delta chain family. As to quaternary structure, F-type ATPases have 2 components, CF(1) - the catalytic core - and CF(0) - the membrane proton channel. CF(1) has five subunits: alpha(3), beta(3), gamma(1), delta(1), epsilon(1). CF(0) has three main subunits: a, b and c.

It is found in the mitochondrion. The protein localises to the mitochondrion inner membrane. Functionally, mitochondrial membrane ATP synthase (F(1)F(0) ATP synthase or Complex V) produces ATP from ADP in the presence of a proton gradient across the membrane which is generated by electron transport complexes of the respiratory chain. F-type ATPases consist of two structural domains, F(1) - containing the extramembraneous catalytic core and F(0) - containing the membrane proton channel, linked together by a central stalk and a peripheral stalk. During catalysis, ATP synthesis in the catalytic domain of F(1) is coupled via a rotary mechanism of the central stalk subunits to proton translocation. Part of the complex F(0) domain and the peripheric stalk, which acts as a stator to hold the catalytic alpha(3)beta(3) subcomplex and subunit a/ATP6 static relative to the rotary elements. This chain is ATP synthase subunit 5, mitochondrial (ATP5), found in Candida glabrata (strain ATCC 2001 / BCRC 20586 / JCM 3761 / NBRC 0622 / NRRL Y-65 / CBS 138) (Yeast).